The sequence spans 414 residues: Histidine--tRNA ligase (414 aa).

Belongs to the class-II aminoacyl-tRNA synthetase family. Homodimer.

The protein localises to the cytoplasm. The catalysed reaction is tRNA(His) + L-histidine + ATP = L-histidyl-tRNA(His) + AMP + diphosphate + H(+). The sequence is that of Histidine--tRNA ligase from Rickettsia conorii (strain ATCC VR-613 / Malish 7).